Here is a 386-residue protein sequence, read N- to C-terminus: Putative membrane-bound transacylase BcsY (386 aa).

Helical transmembrane passes span 37–57, 91–111, 118–138, 156–176, 181–201, 237–257, 258–278, 290–310, 322–342, and 362–382; these read LAIALVVLFHAGWLKGGFIGV, LLPALLCMVALVSAGMLWWVL, IALNGAYALVYLSNIWASGHV, LSLEMQFYAIIFIMALLLPLT, LVLSAIFSASAAYCAYAWHTG, AVYAAAVAVIVGAGLFYPLSY, ACPSWMTVFPCGAVVLIIMLP, LSPLGVISYSVYLWHWPGIVV, AMMAGVLALVMVVSLLSYVLV, and AALLVAACLGLAAVLAYISHV.

This sequence belongs to the acyltransferase 3 family.

The protein resides in the cell inner membrane. The protein operates within glycan metabolism; bacterial cellulose biosynthesis. In terms of biological role, may acylate a glucose moiety into cellulose fibrils, in cooperation with BcsABII and BcsCII. This Komagataeibacter xylinus (Gluconacetobacter xylinus) protein is Putative membrane-bound transacylase BcsY (bcsY).